The chain runs to 388 residues: Succinate--CoA ligase [ADP-forming] subunit beta (388 aa).

The ATP-grasp domain occupies 9 to 244 (KQLFAEFGLP…PSQEDEREAH (236 aa)). ATP-binding positions include lysine 46, 53 to 55 (GRG), glutamate 99, serine 102, and glutamate 107. Residues asparagine 199 and aspartate 213 each contribute to the Mg(2+) site. Residues asparagine 264 and 321–323 (GIV) contribute to the substrate site.

This sequence belongs to the succinate/malate CoA ligase beta subunit family. As to quaternary structure, heterotetramer of two alpha and two beta subunits. Requires Mg(2+) as cofactor.

The catalysed reaction is succinate + ATP + CoA = succinyl-CoA + ADP + phosphate. The enzyme catalyses GTP + succinate + CoA = succinyl-CoA + GDP + phosphate. It functions in the pathway carbohydrate metabolism; tricarboxylic acid cycle; succinate from succinyl-CoA (ligase route): step 1/1. Its function is as follows. Succinyl-CoA synthetase functions in the citric acid cycle (TCA), coupling the hydrolysis of succinyl-CoA to the synthesis of either ATP or GTP and thus represents the only step of substrate-level phosphorylation in the TCA. The beta subunit provides nucleotide specificity of the enzyme and binds the substrate succinate, while the binding sites for coenzyme A and phosphate are found in the alpha subunit. The sequence is that of Succinate--CoA ligase [ADP-forming] subunit beta from Vibrio parahaemolyticus serotype O3:K6 (strain RIMD 2210633).